A 263-amino-acid polypeptide reads, in one-letter code: 5'-nucleotidase SurE (263 aa).

4 residues coordinate a divalent metal cation: Asp8, Asp9, Ser43, and Asn96.

Belongs to the SurE nucleotidase family. A divalent metal cation is required as a cofactor.

Its subcellular location is the cytoplasm. The enzyme catalyses a ribonucleoside 5'-phosphate + H2O = a ribonucleoside + phosphate. Nucleotidase that shows phosphatase activity on nucleoside 5'-monophosphates. This chain is 5'-nucleotidase SurE, found in Jannaschia sp. (strain CCS1).